A 536-amino-acid chain; its full sequence is Phosphoenolpyruvate carboxykinase (ATP) (536 aa).

Substrate is bound by residues Arg61, Tyr195, and Lys201. Residues Lys201, His220, and 236–244 (GLSGTGKTT) contribute to the ATP site. Mn(2+)-binding residues include Lys201 and His220. A Mn(2+)-binding site is contributed by Asp257. The ATP site is built by Glu285, Arg322, and Thr447. Residue Arg322 participates in substrate binding.

It belongs to the phosphoenolpyruvate carboxykinase (ATP) family. Requires Mn(2+) as cofactor.

It is found in the cytoplasm. It catalyses the reaction oxaloacetate + ATP = phosphoenolpyruvate + ADP + CO2. It participates in carbohydrate biosynthesis; gluconeogenesis. In terms of biological role, involved in the gluconeogenesis. Catalyzes the conversion of oxaloacetate (OAA) to phosphoenolpyruvate (PEP) through direct phosphoryl transfer between the nucleoside triphosphate and OAA. This Rhizobium johnstonii (strain DSM 114642 / LMG 32736 / 3841) (Rhizobium leguminosarum bv. viciae) protein is Phosphoenolpyruvate carboxykinase (ATP).